A 443-amino-acid chain; its full sequence is Xaa-Pro dipeptidase (443 aa).

Mn(2+)-binding residues include Asp-246, Asp-257, His-339, Glu-384, and Glu-423.

Belongs to the peptidase M24B family. Bacterial-type prolidase subfamily. Requires Mn(2+) as cofactor.

It catalyses the reaction Xaa-L-Pro dipeptide + H2O = an L-alpha-amino acid + L-proline. In terms of biological role, splits dipeptides with a prolyl residue in the C-terminal position. In Escherichia coli (strain 55989 / EAEC), this protein is Xaa-Pro dipeptidase.